Here is a 414-residue protein sequence, read N- to C-terminus: Multidrug resistance protein MdtG (414 aa).

Transmembrane regions (helical) follow at residues 14-34 (LFVT…IMPF), 56-76 (LVFS…GSLA), 89-109 (ALGM…WQFL), 113-133 (ALLG…ATQV), 144-164 (TLST…GLLA), 171-191 (PVFF…WFYV), 219-239 (ILSL…IAPI), 254-274 (LAFV…ISAP), 288-308 (ILIA…FVQT), and 376-396 (AVFC…YWCL).

The protein belongs to the major facilitator superfamily. DHA1 family. MdtG (TC 2.A.1.2.20) subfamily.

It is found in the cell inner membrane. The polypeptide is Multidrug resistance protein MdtG (Yersinia enterocolitica serotype O:8 / biotype 1B (strain NCTC 13174 / 8081)).